A 226-amino-acid polypeptide reads, in one-letter code: UPF0111 protein HI_1603 (226 aa).

The protein belongs to the UPF0111 family.

In Haemophilus influenzae (strain ATCC 51907 / DSM 11121 / KW20 / Rd), this protein is UPF0111 protein HI_1603.